Reading from the N-terminus, the 496-residue chain is Autophagy-related protein 21 (496 aa).

One copy of the WD 1 repeat lies at 1–35 (MKVLQFNQDATCCVVAASSHQISIFNCDPFGKCFE). Positions 41–86 (SKKKTSNNNGTASNSESRNNEESILITNGSRDRTDAEEEEDNEDNA) are disordered. Positions 46–57 (SNNNGTASNSES) are enriched in low complexity. Over residues 75-84 (DAEEEEDNED) the composition is skewed to acidic residues. The stretch at 148-190 (VMNRKRMCVLLESDQIFIYDISCMKPLETIDLWEDHYKRSQAN) is one WD 2 repeat. Thr213 bears the Phosphothreonine mark. Ser237 carries the post-translational modification Phosphoserine. WD repeat units follow at residues 294 to 334 (VHKG…DYMS), 346 to 385 (TRLC…NSLP), and 448 to 488 (VNES…GECV). A L/FRRG motif motif is present at residues 342 to 346 (FRRGT).

The protein belongs to the WD repeat PROPPIN family.

The protein localises to the cytoplasm. It is found in the vacuole membrane. In terms of biological role, required for cytoplasm to vacuole transport (Cvt) vesicles formation and mitophagy. Involved in binding of phosphatidylethanolamine to ATG8 and in recruitment of ATG8 and ATG5 to the pre-autophagosomal structure. Protects ATG8 from ARG4-mediated cleavage. Essential for maturation of proaminopeptidase I. The chain is Autophagy-related protein 21 (ATG21) from Saccharomyces cerevisiae (strain YJM789) (Baker's yeast).